Reading from the N-terminus, the 603-residue chain is Myotubularin (603 aa).

Residues S13 and S18 each carry the phosphoserine modification. The GRAM domain occupies 29-97; it reads QDVSETVPRL…GVISRIEKMG (69 aa). The 376-residue stretch at 163 to 538 folds into the Myotubularin phosphatase domain; the sequence is GWTVYNPVEE…RHLELWVNYY (376 aa). A 1,2-diacyl-sn-glycero-3-phospho-(1D-myo-inositol-3,5-bisphosphate)-binding residues include N288, N313, and I314. Residues N288, N313, and I314 each contribute to the a 1,2-diacyl-sn-glycero-3-phospho-(1D-myo-inositol-3-phosphate) site. Residue C375 is the Phosphocysteine intermediate of the active site. A 1,2-diacyl-sn-glycero-3-phospho-(1D-myo-inositol-3,5-bisphosphate) is bound by residues S376, D377, G378, W379, D380, R381, K417, and R421. 6 residues coordinate a 1,2-diacyl-sn-glycero-3-phospho-(1D-myo-inositol-3-phosphate): S376, D377, G378, W379, D380, and R381. R421 lines the a 1,2-diacyl-sn-glycero-3-phospho-(1D-myo-inositol-3-phosphate) pocket. T495 is modified (phosphothreonine). S588 carries the post-translational modification Phosphoserine.

The protein belongs to the protein-tyrosine phosphatase family. Non-receptor class myotubularin subfamily. In terms of assembly, heterodimer with MTMR12. Interacts with KMT2A/MLL1 (via SET domain). Interacts with DES in skeletal muscle but not in cardiac muscle. Interacts with SPEG. As to expression, widely expressed with highest levels detected in heart and muscle and low levels in brain (at protein level). Expressed in skeletal muscles (at protein level).

It localises to the cytoplasm. It is found in the cell membrane. The protein resides in the cell projection. The protein localises to the filopodium. Its subcellular location is the ruffle. It localises to the late endosome. It is found in the myofibril. The protein resides in the sarcomere. The catalysed reaction is a 1,2-diacyl-sn-glycero-3-phospho-(1D-myo-inositol-3-phosphate) + H2O = a 1,2-diacyl-sn-glycero-3-phospho-(1D-myo-inositol) + phosphate. The enzyme catalyses a 1,2-diacyl-sn-glycero-3-phospho-(1D-myo-inositol-3,5-bisphosphate) + H2O = a 1,2-diacyl-sn-glycero-3-phospho-(1D-myo-inositol-5-phosphate) + phosphate. It catalyses the reaction 1,2-dioctanoyl-sn-glycero-3-phospho-(1-D-myo-inositol-3-phosphate) + H2O = 1,2-dioctanoyl-sn-glycero-3-phospho-(1D-myo-inositol) + phosphate. It carries out the reaction 1,2-dioctanoyl-sn-glycero-3-phospho-(1D-myo-inositol-3,5-bisphosphate) + H2O = 1,2-dioctanoyl-sn-glycero-3-phospho-(1D-myo-inositol-5-phosphate) + phosphate. The catalysed reaction is 1,2-dihexadecanoyl-sn-glycero-3-phospho-(1D-myo-inositol-3,5-phosphate) + H2O = 1,2-dihexadecanoyl-sn-glycero-3-phospho-(1D-myo-inositol-5-phosphate) + phosphate. With respect to regulation, allosterically activated by phosphatidylinositol 5-phosphate (PI5P). Functionally, lipid phosphatase which dephosphorylates phosphatidylinositol 3-monophosphate (PI3P) and phosphatidylinositol 3,5-bisphosphate (PI(3,5)P2). Has also been shown to dephosphorylate phosphotyrosine- and phosphoserine-containing peptides. Negatively regulates EGFR degradation through regulation of EGFR trafficking from the late endosome to the lysosome. Plays a role in vacuolar formation and morphology. Regulates desmin intermediate filament assembly and architecture. Plays a role in mitochondrial morphology and positioning. Required for skeletal muscle maintenance but not for myogenesis. In skeletal muscles, stabilizes MTMR12 protein levels. The protein is Myotubularin of Mus musculus (Mouse).